The primary structure comprises 375 residues: Probable disease resistance protein At1g52660 (375 aa).

Residues 158-372 form the NB-ARC domain; it reads ENTGIIGLYG…LSNSPPNFSG (215 aa). 167–174 provides a ligand contact to ATP; it reads GVEGVGKT.

Possible disease resistance protein. This Arabidopsis thaliana (Mouse-ear cress) protein is Probable disease resistance protein At1g52660.